We begin with the raw amino-acid sequence, 251 residues long: Methionine aminopeptidase (251 aa).

A substrate-binding site is contributed by His76. Positions 93, 104, and 168 each coordinate a divalent metal cation. His175 is a binding site for substrate. A divalent metal cation-binding residues include Glu202 and Glu233.

This sequence belongs to the peptidase M24A family. Methionine aminopeptidase type 1 subfamily. As to quaternary structure, monomer. Requires Co(2+) as cofactor. The cofactor is Zn(2+). Mn(2+) is required as a cofactor. It depends on Fe(2+) as a cofactor.

The enzyme catalyses Release of N-terminal amino acids, preferentially methionine, from peptides and arylamides.. Removes the N-terminal methionine from nascent proteins. The N-terminal methionine is often cleaved when the second residue in the primary sequence is small and uncharged (Met-Ala-, Cys, Gly, Pro, Ser, Thr, or Val). Requires deformylation of the N(alpha)-formylated initiator methionine before it can be hydrolyzed. This chain is Methionine aminopeptidase, found in Staphylococcus epidermidis (strain ATCC 35984 / DSM 28319 / BCRC 17069 / CCUG 31568 / BM 3577 / RP62A).